The following is a 289-amino-acid chain: Acetyl-coenzyme A carboxylase carboxyl transferase subunit beta (289 aa).

In terms of domain architecture, CoA carboxyltransferase N-terminal spans 34 to 289; the sequence is MWVKCNKCGE…KLINMHQNSF (256 aa). The Zn(2+) site is built by Cys-38, Cys-41, Cys-57, and Cys-60. The C4-type zinc finger occupies 38-60; sequence CNKCGEILYQNDLEKNYMVCNLC.

This sequence belongs to the AccD/PCCB family. Acetyl-CoA carboxylase is a heterohexamer composed of biotin carboxyl carrier protein (AccB), biotin carboxylase (AccC) and two subunits each of ACCase subunit alpha (AccA) and ACCase subunit beta (AccD). Zn(2+) is required as a cofactor.

It localises to the cytoplasm. It catalyses the reaction N(6)-carboxybiotinyl-L-lysyl-[protein] + acetyl-CoA = N(6)-biotinyl-L-lysyl-[protein] + malonyl-CoA. The protein operates within lipid metabolism; malonyl-CoA biosynthesis; malonyl-CoA from acetyl-CoA: step 1/1. Functionally, component of the acetyl coenzyme A carboxylase (ACC) complex. Biotin carboxylase (BC) catalyzes the carboxylation of biotin on its carrier protein (BCCP) and then the CO(2) group is transferred by the transcarboxylase to acetyl-CoA to form malonyl-CoA. The protein is Acetyl-coenzyme A carboxylase carboxyl transferase subunit beta of Clostridium botulinum (strain Kyoto / Type A2).